The chain runs to 283 residues: RuBisCO-associated protein (283 aa).

A GH18 domain is found at 5–283; that stretch reads FKVFREFTSD…PEILLLAASK (279 aa). Glu-128 functions as the Proton donor in the catalytic mechanism.

This sequence belongs to the glycosyl hydrolase 18 family. Forms part of the RuBisCO complex. In terms of tissue distribution, leaves.

In Glycine max (Soybean), this protein is RuBisCO-associated protein.